Consider the following 404-residue polypeptide: Dual-specificity RNA methyltransferase RlmN (404 aa).

Glu-118 (proton acceptor) is an active-site residue. Residues 125 to 357 (VGRAGALCVS…NKAGYSSPIR (233 aa)) enclose the Radical SAM core domain. Cys-132 and Cys-368 are joined by a disulfide. [4Fe-4S] cluster-binding residues include Cys-139, Cys-143, and Cys-146. Residues 194–195 (GE), Ser-226, 248–250 (SLH), and Asn-325 each bind S-adenosyl-L-methionine. Residue Cys-368 is the S-methylcysteine intermediate of the active site.

It belongs to the radical SAM superfamily. RlmN family. It depends on [4Fe-4S] cluster as a cofactor.

It localises to the cytoplasm. It carries out the reaction adenosine(2503) in 23S rRNA + 2 reduced [2Fe-2S]-[ferredoxin] + 2 S-adenosyl-L-methionine = 2-methyladenosine(2503) in 23S rRNA + 5'-deoxyadenosine + L-methionine + 2 oxidized [2Fe-2S]-[ferredoxin] + S-adenosyl-L-homocysteine. It catalyses the reaction adenosine(37) in tRNA + 2 reduced [2Fe-2S]-[ferredoxin] + 2 S-adenosyl-L-methionine = 2-methyladenosine(37) in tRNA + 5'-deoxyadenosine + L-methionine + 2 oxidized [2Fe-2S]-[ferredoxin] + S-adenosyl-L-homocysteine. Functionally, specifically methylates position 2 of adenine 2503 in 23S rRNA and position 2 of adenine 37 in tRNAs. m2A2503 modification seems to play a crucial role in the proofreading step occurring at the peptidyl transferase center and thus would serve to optimize ribosomal fidelity. The sequence is that of Dual-specificity RNA methyltransferase RlmN from Caulobacter vibrioides (strain ATCC 19089 / CIP 103742 / CB 15) (Caulobacter crescentus).